The primary structure comprises 2344 residues: Pecanex-like protein 1 (2344 aa).

The next 2 membrane-spanning stretches (helical) occupy residues 33–53 (ALHL…YMAL) and 57–77 (MIIV…LKMV). 4 disordered regions span residues 101 to 163 (QRAK…GSSR), 271 to 290 (SHSY…SSSA), 306 to 692 (QQQR…TRAR), and 749 to 837 (VTRS…VQSR). Residues 143–163 (SSRNSYAGLDPSNQIGSGSSR) are compositionally biased toward polar residues. The segment covering 272–282 (HSYRKEHRPRG) has biased composition (basic residues). The segment covering 328-343 (RESSAGKSCPPAQSQP) has biased composition (polar residues). The segment covering 372–390 (SLRSLSTRSSGSTESYCSG) has biased composition (low complexity). Residues 396 to 406 (NSTLSSYKSEQ) show a composition bias toward polar residues. Basic and acidic residues-rich tracts occupy residues 416–458 (LSEH…DKTA), 508–522 (RPPE…EQSE), and 531–547 (RVCK…DVRP). Basic residues predominate over residues 557–572 (TSAHKPGRRRTGKKRA). Low complexity predominate over residues 616-638 (SIHSAHQFSSDSSSSATSHSCQS). Residues 749–758 (VTRSRNSLPS) show a composition bias toward polar residues. 2 stretches are compositionally biased toward low complexity: residues 770–781 (AATGAAQASEEA) and 817–835 (LSLQ…VKVQ). 3 helical membrane-spanning segments follow: residues 1010–1030 (ILAV…LIQG), 1035–1055 (IWVF…LKSV), and 1069–1089 (IIAY…WLLD). Asparagine 1094 carries N-linked (GlcNAc...) asparagine glycosylation. Residues 1119–1139 (LVIVFTLCFPIVFFIGLLPQV) form a helical membrane-spanning segment. Asparagine 1158 carries an N-linked (GlcNAc...) asparagine glycan. 4 helical membrane-spanning segments follow: residues 1163-1183 (LLAA…LYGL), 1196-1216 (HVPV…YHLS), 1269-1289 (LVVC…TVFT), and 1297-1317 (YVLY…LPQV). N-linked (GlcNAc...) asparagine glycosylation is found at asparagine 1582, asparagine 1723, asparagine 1985, and asparagine 2075. The tract at residues 2051–2123 (EDSDTGGGTS…SSLVRQSPAR (73 aa)) is disordered. Composition is skewed to polar residues over residues 2061 to 2081 (CPGN…QGST) and 2095 to 2118 (PTTS…SLVR). Asparagine 2231, asparagine 2237, and asparagine 2263 each carry an N-linked (GlcNAc...) asparagine glycan.

The protein belongs to the pecanex family.

It localises to the membrane. This chain is Pecanex-like protein 1, found in Mus musculus (Mouse).